Here is a 486-residue protein sequence, read N- to C-terminus: Glutamyl-tRNA(Gln) amidotransferase subunit A (486 aa).

Catalysis depends on charge relay system residues K79 and S154. Catalysis depends on S178, which acts as the Acyl-ester intermediate.

This sequence belongs to the amidase family. GatA subfamily. As to quaternary structure, heterotrimer of A, B and C subunits.

It catalyses the reaction L-glutamyl-tRNA(Gln) + L-glutamine + ATP + H2O = L-glutaminyl-tRNA(Gln) + L-glutamate + ADP + phosphate + H(+). Allows the formation of correctly charged Gln-tRNA(Gln) through the transamidation of misacylated Glu-tRNA(Gln) in organisms which lack glutaminyl-tRNA synthetase. The reaction takes place in the presence of glutamine and ATP through an activated gamma-phospho-Glu-tRNA(Gln). The chain is Glutamyl-tRNA(Gln) amidotransferase subunit A from Myxococcus xanthus (strain DK1622).